Consider the following 127-residue polypeptide: Small ribosomal subunit protein uS13 (127 aa).

The protein belongs to the universal ribosomal protein uS13 family. Part of the 30S ribosomal subunit. Forms a loose heterodimer with protein S19. Forms two bridges to the 50S subunit in the 70S ribosome.

In terms of biological role, located at the top of the head of the 30S subunit, it contacts several helices of the 16S rRNA. In the 70S ribosome it contacts the 23S rRNA (bridge B1a) and protein L5 of the 50S subunit (bridge B1b), connecting the 2 subunits; these bridges are implicated in subunit movement. Contacts the tRNAs in the A and P-sites. The sequence is that of Small ribosomal subunit protein uS13 from Pelagibacter ubique (strain HTCC1062).